The primary structure comprises 189 residues: Peptidyl-tRNA hydrolase (189 aa).

Position 16 (Tyr-16) interacts with tRNA. The Proton acceptor role is filled by His-21. TRNA is bound by residues Phe-67, Asn-69, and Asn-115.

This sequence belongs to the PTH family. Monomer.

It localises to the cytoplasm. The enzyme catalyses an N-acyl-L-alpha-aminoacyl-tRNA + H2O = an N-acyl-L-amino acid + a tRNA + H(+). Hydrolyzes ribosome-free peptidyl-tRNAs (with 1 or more amino acids incorporated), which drop off the ribosome during protein synthesis, or as a result of ribosome stalling. Its function is as follows. Catalyzes the release of premature peptidyl moieties from peptidyl-tRNA molecules trapped in stalled 50S ribosomal subunits, and thus maintains levels of free tRNAs and 50S ribosomes. This chain is Peptidyl-tRNA hydrolase, found in Legionella pneumophila (strain Lens).